The chain runs to 439 residues: MTSEHTMLTGVTDGFFCCLLGTPPNAVRPLESVESSDGYTFVEVKPGRVLRVKHAGPAPIPTPPPPPPEDDPGVKTGLVRCQRRITVYRNGRLVVENLGRAPRADLQGRSGSGDPPAALEVELAEPAGGDTRANPGSGRRRRPRRPKRTIHIDCEQRITSCKGAQADVVLFFIHGVGGSLAIWKEQLDFFVRLGYEVVAPDLAGHGASSAPQVAAAYTFYALAEDMRAIFTRYAKKRNVLIGHSYGVSFCTFLAHEYPDLVHKVIMINGGGPTALEPSLCSIFNMPTCVLHCLSPCLAWSFLKAGFARQGAKEKQLLKEGNAFNVSSFVLRAMMSGQYWPEGDEVYHAELTVPVLLVHGMHDKFVPVEEDQRMAEILLLAFLKLIEEGSHMVMLECPETVNTLLHEFLLWEPEPEAEPKLEPKPKPQLLQPEPAPGEEK.

2 disordered regions span residues 54–75 (HAGP…PGVK) and 122–148 (ELAE…RPKR). Residues 58–67 (APIPTPPPPP) are compositionally biased toward pro residues. Residues 138–148 (GRRRRPRRPKR) show a composition bias toward basic residues. The 103-residue stretch at 169 to 271 (VLFFIHGVGG…HKVIMINGGG (103 aa)) folds into the AB hydrolase-1 domain. Active-site charge relay system residues include Ser244, Asp362, and His390. Positions 415–439 (EAEPKLEPKPKPQLLQPEPAPGEEK) are disordered.

Belongs to the AB hydrolase superfamily. As to quaternary structure, interacts with NLRP3 (via NACHT and LLR domains); this interaction is enhanced in the presence of NLRP3 inflammasome inducers, such as ATP, nigericin, silica, or alum. Interacts with ZDHHC12.

The protein resides in the cytoplasm. In terms of biological role, negatively regulates NLRP3-driven inflammation. Promotes NLRP3 degradation through the chaperone-mediated autophagy (CMA) pathway, hence attenuating inflammasome activation and IL1B secretion. Acts by recruiting palmitoyltransferase ZDHHC12 to NLRP3, facilitating NLRP3 palmitoylation and subsequent degradation. The polypeptide is Protein ABHD8 (Mus musculus (Mouse)).